A 494-amino-acid chain; its full sequence is GlcNAc-binding protein A (494 aa).

The signal sequence occupies residues 1–21 (MKLNKIMLAMVVMSISGTAMA). A Chitin-binding type-4 domain is found at 22–192 (HGYIENPPSR…TFYNMIDAEF (171 aa)). Residues 435–484 (APAWSNKSSYQAKDTVTHNGRIYMSKWWADKASVPGDAAVTDTTGNGSGW) enclose the Chitin-binding type-3 domain. Residues 474-494 (VTDTTGNGSGWGKVWEDKGAC) are disordered.

This sequence belongs to the GbpA family.

Its subcellular location is the secreted. Probably interacts with GlcNAc residues. May promote attachment to both epithelial cell surfaces and chitin. The sequence is that of GlcNAc-binding protein A from Yersinia enterocolitica serotype O:8 / biotype 1B (strain NCTC 13174 / 8081).